Reading from the N-terminus, the 445-residue chain is 3-phosphoshikimate 1-carboxyvinyltransferase (445 aa).

The span at 1–20 shows a compositional bias: polar residues; it reads MSSTHPGRTIRSGATQNLSG. The disordered stretch occupies residues 1-24; that stretch reads MSSTHPGRTIRSGATQNLSGTIRP. The 3-phosphoshikimate site is built by Lys28, Ser29, and Arg33. Lys28 lines the phosphoenolpyruvate pocket. Phosphoenolpyruvate contacts are provided by Gly101 and Arg129. 3-phosphoshikimate is bound by residues Ser174, Gln176, Asp322, and Lys349. Phosphoenolpyruvate is bound at residue Gln176. The active-site Proton acceptor is Asp322. Arg353 and Arg397 together coordinate phosphoenolpyruvate.

It belongs to the EPSP synthase family. As to quaternary structure, monomer.

The protein resides in the cytoplasm. The catalysed reaction is 3-phosphoshikimate + phosphoenolpyruvate = 5-O-(1-carboxyvinyl)-3-phosphoshikimate + phosphate. It participates in metabolic intermediate biosynthesis; chorismate biosynthesis; chorismate from D-erythrose 4-phosphate and phosphoenolpyruvate: step 6/7. Functionally, catalyzes the transfer of the enolpyruvyl moiety of phosphoenolpyruvate (PEP) to the 5-hydroxyl of shikimate-3-phosphate (S3P) to produce enolpyruvyl shikimate-3-phosphate and inorganic phosphate. The protein is 3-phosphoshikimate 1-carboxyvinyltransferase of Magnetococcus marinus (strain ATCC BAA-1437 / JCM 17883 / MC-1).